Consider the following 635-residue polypeptide: tRNA uridine 5-carboxymethylaminomethyl modification enzyme MnmG (635 aa).

G15–G20 is a binding site for FAD. G276–F290 lines the NAD(+) pocket.

The protein belongs to the MnmG family. Homodimer. Heterotetramer of two MnmE and two MnmG subunits. FAD serves as cofactor.

The protein resides in the cytoplasm. In terms of biological role, NAD-binding protein involved in the addition of a carboxymethylaminomethyl (cmnm) group at the wobble position (U34) of certain tRNAs, forming tRNA-cmnm(5)s(2)U34. The protein is tRNA uridine 5-carboxymethylaminomethyl modification enzyme MnmG of Streptococcus sanguinis (strain SK36).